Consider the following 313-residue polypeptide: Intracellular endo-alpha-(1-&gt;5)-L-arabinanase (313 aa).

D27 functions as the Proton acceptor in the catalytic mechanism. Substrate contacts are provided by residues D27, G105, 144-147 (NAID), and 164-166 (SFW). E201 serves as the catalytic Proton donor. H271 contacts Ca(2+).

Belongs to the glycosyl hydrolase 43 family. Monomer. Ca(2+) serves as cofactor.

Its subcellular location is the cytoplasm. It catalyses the reaction Endohydrolysis of (1-&gt;5)-alpha-arabinofuranosidic linkages in (1-&gt;5)-arabinans.. It participates in glycan metabolism; L-arabinan degradation. In terms of biological role, involved in the degradation of arabinan and is a key enzyme in the complete degradation of the plant cell wall. Catalyzes the cleavage of endo alpha-(1-&gt;5)-L-arabinofuranosyl residues in debranched arabinan. The protein is Intracellular endo-alpha-(1-&gt;5)-L-arabinanase (abn-ts) of Geobacillus thermodenitrificans.